The sequence spans 330 residues: D-cysteine desulfhydrase (330 aa).

The residue at position 52 (Lys-52) is an N6-(pyridoxal phosphate)lysine.

It belongs to the ACC deaminase/D-cysteine desulfhydrase family. In terms of assembly, homodimer. It depends on pyridoxal 5'-phosphate as a cofactor.

It catalyses the reaction D-cysteine + H2O = hydrogen sulfide + pyruvate + NH4(+) + H(+). In terms of biological role, catalyzes the alpha,beta-elimination reaction of D-cysteine and of several D-cysteine derivatives. It could be a defense mechanism against D-cysteine. The chain is D-cysteine desulfhydrase from Yersinia pseudotuberculosis serotype O:1b (strain IP 31758).